A 402-amino-acid chain; its full sequence is Zinc finger protein 322 (402 aa).

The C2H2-type 1; atypical zinc-finger motif lies at 43–65; that stretch reads YQCLECKQNFCENLALIMCERTH. C2H2-type zinc fingers lie at residues 71-93, 99-121, 127-149, 155-177, 183-205, 211-233, 239-261, and 267-289; these read YKCDMCEKTFVQSSDLTSHQRIH, YKCSKCEKSFWHHLALSGHQRTH, YTCDICGKNFGQSSDLLVHQRSH, YLCSECDKCFSRSTNLIRHRRTH, FKCLECEKAFSGKSDLISHQRTH, YKCNKCEKSYRHRSAFIVHKRVH, YKCGACEKCFGQKSDLIVHQRVH, and YKCLECMRSFTRSANLIRHQATH. Residues 293-315 form a C2H2-type 10; degenerate zinc finger; it reads FKCLEYEKSFNCSSDLIVHQRIH. The segment at 351–373 adopts a C2H2-type 11; degenerate zinc-finger fold; sequence YKYTVCDKSFHQSSALLQHQTVH. Residue serine 391 is modified to Phosphoserine.

It belongs to the krueppel C2H2-type zinc-finger protein family. Interacts with POU5F1. In terms of tissue distribution, ubiquitous. Highly expressed in heart and skeletal muscle.

It localises to the cytoplasm. Its subcellular location is the nucleus. In terms of biological role, transcriptional activator. Important for maintenance of pluripotency in embryonic stem cells. Binds directly to the POU5F1 distal enhancer and the NANOG proximal promoter, and enhances expression of both genes. Can also bind to numerous other gene promoters and regulates expression of many other pluripotency factors, either directly or indirectly. Promotes inhibition of MAPK signaling during embryonic stem cell differentiation. The polypeptide is Zinc finger protein 322 (ZNF322) (Homo sapiens (Human)).